The chain runs to 240 residues: Eukaryotic translation initiation factor 4E-3 (240 aa).

The disordered stretch occupies residues 1-51 (MVVTDSPVSGIMADQNIDPNTTTSPSPKEKHVSAIKAISGDEKAPSKEKKN). The span at 17 to 26 (IDPNTTTSPS) shows a compositional bias: polar residues. Residues 39-51 (SGDEKAPSKEKKN) show a composition bias toward basic and acidic residues. EIF4G-binding stretches follow at residues 65–68 (HCFQ) and 75–111 (FDNP…NNIH). Residues 83–88 (NQVIWG), lysine 115, and 133–134 (WE) contribute to the mRNA site. Cysteine 138 and cysteine 176 form a disulfide bridge. The EIF4G-binding stretch occupies residues 159–168 (NTLLALVGEQ). MRNA contacts are provided by residues 183 to 188 (RARGDR) and 228 to 232 (KTLDR).

Belongs to the eukaryotic initiation factor 4E family. As to quaternary structure, EIF4F is a multi-subunit complex, the composition of which varies with external and internal environmental conditions. It is composed of at least EIF4A, EIF4E and EIF4G. EIF4E is also known to interact with other partners. In higher plants two isoforms of EIF4F have been identified, named isoform EIF4F and isoform EIF(iso)4F. Isoform EIF4F has subunits p220 and p26, whereas isoform EIF(iso)4F has subunits p82 and p28. In terms of processing, according to the redox status, the Cys-138-Cys-176 disulfide bridge may have a role in regulating protein function by affecting its ability to bind capped mRNA.

It is found in the nucleus. The protein localises to the cytoplasm. In terms of biological role, component of the protein complex eIF4F, which is involved in the recognition of the mRNA cap, ATP-dependent unwinding of 5'-terminal secondary structure and recruitment of mRNA to the ribosome. Recognizes and binds the 7-methylguanosine-containing mRNA cap during an early step in the initiation of protein synthesis and facilitates ribosome binding by inducing the unwinding of the mRNAs secondary structures. The polypeptide is Eukaryotic translation initiation factor 4E-3 (Arabidopsis thaliana (Mouse-ear cress)).